Reading from the N-terminus, the 385-residue chain is Glucans biosynthesis protein C (385 aa).

10 helical membrane-spanning segments follow: residues 17–37, 60–80, 91–111, 137–157, 173–193, 212–232, 239–259, 274–294, 311–331, and 338–358; these read AWLMLLGIPFHISLIYSSHTW, MQVFFVISGYFSYMLFLRYPL, VGIPMLTAIPLLTLPQFIMLQ, ISHLWFLLVLVVMTTLCVWIF, KFSMVKLSVIFLCLGIGYAVI, FIVMQTLFYLPFFILGALAFI, LFTTPSRGCTLAAALAFVAYL, TESVITMVLGLWMVNVVFSFG, ASLFIYLVHHPLTLFFGAYIT, and WLGFLCGLIFVVGIAIILYEI.

It belongs to the acyltransferase 3 family. OpgC subfamily.

The protein localises to the cell membrane. It functions in the pathway glycan metabolism; osmoregulated periplasmic glucan (OPG) biosynthesis. Functionally, necessary for the succinyl substitution of periplasmic glucans. Could catalyze the transfer of succinyl residues from the cytoplasmic side of the membrane to the nascent glucan backbones on the periplasmic side of the membrane. This chain is Glucans biosynthesis protein C, found in Shigella dysenteriae serotype 1 (strain Sd197).